Consider the following 808-residue polypeptide: MSTTSRPGLWALITAAVFALCGAILTVGGAWVAAIGGPLYYVILGLALLATAFLSFRRNPAALYLFAVVVFGTVIWELTVVGLDIWALIPRSDIVIILGIWLLLPFVSRQIGGTRTTVLPLAGAVGVAVLALFASLFTDPHDISGDLPTQIANASPADPDNVPASEWHAYGRTQAGDRWSPLNQINASNVSNLKVAWHIHTKDMMNSNDPGEATNEATPIEFNNTLYMCSLHQKLFAVDGATGNVKWVYDPKLQINPGFQHLTCRGVSFHETPANATDSDGNPAPTDCAKRIILPVNDGRLVEVDADTGKTCSGFGNNGEIDLRVPNQPYTTPGQYEPTSPPVITDKLIIANSAITDNGSVKQASGATQAFDVYTGKRVWVFDASNPDPNQLPDDSHPVFHPNSPNSWIVSSYDRNLNLVYIPMGVGTPDQWGGDRTKDSERFAPGIVALNADTGKLAWFYQTVHHDLWDMDVPSQPSLVDVTQKDGTLVPAIYAPTKTGDIFVLDRRTGKEIVPAPETPVPQGAAPGDHTSPTQPMSQLTLRPKNPLNDSDIWGGTIFDQMFCSIYFHTLRYEGPFTPPSLKGSLIFPGDLGMFEWGGLAVDPQRQVAFANPISLPFVSQLVPRGPGNPLWPEKDAKGTGGETGLQHNYGIPYAVNLHPFLDPVLLPFGIKMPCRTPPWGYVAGIDLKTNKVVWQHRNGTLRDSMYGSSLPIPLPPIKIGVPSLGGPLSTAGNLGFLTASMDYYIRAYNLTTGKVLWQDRLPAGAQATPITYAINGKQYIVTYAGGHNSFPTRMGDDIIAYALPDQK.

Positions 1–33 are cleaved as a signal peptide; that stretch reads MSTTSRPGLWALITAAVFALCGAILTVGGAWVA. The next 4 helical transmembrane spans lie at 35–54, 59–76, 94–108, and 123–138; these read IGGPLYYVILGLALLATAFL, NPAALYLFAVVVFGTVIW, IVIILGIWLLLPFVS, and GAVGVAVLALFASLFT. Residue aspartate 470 is the Proton acceptor of the active site. The disordered stretch occupies residues 514 to 545; sequence VPAPETPVPQGAAPGDHTSPTQPMSQLTLRPK. Residues 531–541 show a composition bias toward polar residues; it reads TSPTQPMSQLT.

The protein belongs to the bacterial PQQ dehydrogenase family. Pyrroloquinoline quinone serves as cofactor.

Its subcellular location is the cell inner membrane. It catalyses the reaction a ubiquinone + D-glucose = D-glucono-1,5-lactone + a ubiquinol. The chain is Quinoprotein glucose dehydrogenase (gdh) from Gluconobacter oxydans (strain 621H) (Gluconobacter suboxydans).